Here is a 2264-residue protein sequence, read N- to C-terminus: Protein Ycf2 (2264 aa).

ATP is bound at residue G1611–S1618.

Belongs to the Ycf2 family.

The protein localises to the plastid. The protein resides in the chloroplast stroma. In terms of biological role, probable ATPase of unknown function. Its presence in a non-photosynthetic plant (Epifagus virginiana) and experiments in tobacco indicate that it has an essential function which is probably not related to photosynthesis. The polypeptide is Protein Ycf2 (Lactuca sativa (Garden lettuce)).